The primary structure comprises 187 residues: UPF0301 protein Noc_0368 (187 aa).

It belongs to the UPF0301 (AlgH) family.

In Nitrosococcus oceani (strain ATCC 19707 / BCRC 17464 / JCM 30415 / NCIMB 11848 / C-107), this protein is UPF0301 protein Noc_0368.